We begin with the raw amino-acid sequence, 463 residues long: Protein translocase subunit SecY (463 aa).

Topologically, residues 1–20 (MGFMDFLAKMGENLPAVSKP) are cytoplasmic. The helical transmembrane segment at 21–47 (KDKPTLTRKLLWTFIGLIVYLLMASIP) threads the bilayer. The Extracellular segment spans residues 48–60 (LYGVTSSNSFLSN). The helical intramembrane region spans 61 to 68 (FLAQQIIF). The discontinuously helical transmembrane segment at 61–89 (FLAQQIIFASSQGTLAQLGIGPVITSGLI) threads the bilayer. Residues 69-80 (ASSQGTLAQLGI) lie within the membrane without spanning it. An intramembrane region (helical) is located at residues 81-89 (GPVITSGLI). Over 90–110 (MQILVGSKLINVDLTTQEGKS) the chain is Cytoplasmic. A helical transmembrane segment spans residues 111 to 134 (KFTQAEKALALIFIIVESSLFGYV). Topologically, residues 135 to 142 (FTRATSNI) are extracellular. A helical membrane pass occupies residues 143 to 167 (LLPIIVVVQLIIASYIILLLDEMIQ). Topologically, residues 168-174 (KGWGLGS) are cytoplasmic. Residues 175–193 (GVSLFIMAGIMKVIFWNMF) form a helical membrane-spanning segment. At 194-236 (GIVSVQSQNLPVGFFPLLVSYITSGRNLQEIVLNTSSTTPYQP) the chain is on the extracellular side. A helical transmembrane segment spans residues 237–258 (DLIGLIATVGLTILIVYLVNTN). Over 259-283 (IYIPVTTQRLRGIRTTVPLNFLYVS) the chain is Cytoplasmic. The helical transmembrane segment at 284–305 (SIPVIFVSVLGADIQLFASLAN) threads the bilayer. The Extracellular segment spans residues 306–341 (SISNSASGILTDIANAFFFPPQGVPHSVYALVVDPV). The helical transmembrane segment at 342 to 361 (GAAIYAAVFIVLSIVFGMLW) threads the bilayer. The Cytoplasmic segment spans residues 362–404 (IDVAGLDPKTQAEQMIRSGIEIPGMRTNPRIIEGILSKYIYAL). A helical transmembrane segment spans residues 405–423 (GFFSSLIVGLIAVVATFLG). Residues 424 to 426 (TYG) lie on the Extracellular side of the membrane. The helical transmembrane segment at 427 to 441 (TGVGLLLAITIAMQY) threads the bilayer. Residues 442 to 463 (YNLLAYERTLEMYPLLKRIVGE) lie on the Cytoplasmic side of the membrane.

It belongs to the SecY/SEC61-alpha family. As to quaternary structure, component of the Sec protein translocase complex. Heterotrimer consisting of alpha (SecY), beta (SecG) and gamma (SecE) subunits. The heterotrimers can form oligomers, although 1 heterotrimer is thought to be able to translocate proteins. Interacts with the ribosome. May interact with SecDF, and other proteins may be involved.

Its subcellular location is the cell membrane. Functionally, the central subunit of the protein translocation channel SecYEG. Consists of two halves formed by TMs 1-5 and 6-10. These two domains form a lateral gate at the front which open onto the bilayer between TMs 2 and 7, and are clamped together by SecE at the back. The channel is closed by both a pore ring composed of hydrophobic SecY resides and a short helix (helix 2A) on the extracellular side of the membrane which forms a plug. The plug probably moves laterally to allow the channel to open. The ring and the pore may move independently. In Sulfolobus acidocaldarius (strain ATCC 33909 / DSM 639 / JCM 8929 / NBRC 15157 / NCIMB 11770), this protein is Protein translocase subunit SecY.